Here is a 156-residue protein sequence, read N- to C-terminus: Small ribosomal subunit protein uS7 (156 aa).

It belongs to the universal ribosomal protein uS7 family. As to quaternary structure, part of the 30S ribosomal subunit. Contacts proteins S9 and S11.

One of the primary rRNA binding proteins, it binds directly to 16S rRNA where it nucleates assembly of the head domain of the 30S subunit. Is located at the subunit interface close to the decoding center, probably blocks exit of the E-site tRNA. This Moorella thermoacetica (strain ATCC 39073 / JCM 9320) protein is Small ribosomal subunit protein uS7.